A 217-amino-acid chain; its full sequence is Imidazole glycerol phosphate synthase subunit HisH (217 aa).

Positions Met-1–Glu-212 constitute a Glutamine amidotransferase type-1 domain. Cys-79 (nucleophile) is an active-site residue. Active-site residues include His-187 and Glu-189.

In terms of assembly, heterodimer of HisH and HisF.

It localises to the cytoplasm. The enzyme catalyses 5-[(5-phospho-1-deoxy-D-ribulos-1-ylimino)methylamino]-1-(5-phospho-beta-D-ribosyl)imidazole-4-carboxamide + L-glutamine = D-erythro-1-(imidazol-4-yl)glycerol 3-phosphate + 5-amino-1-(5-phospho-beta-D-ribosyl)imidazole-4-carboxamide + L-glutamate + H(+). The catalysed reaction is L-glutamine + H2O = L-glutamate + NH4(+). It functions in the pathway amino-acid biosynthesis; L-histidine biosynthesis; L-histidine from 5-phospho-alpha-D-ribose 1-diphosphate: step 5/9. IGPS catalyzes the conversion of PRFAR and glutamine to IGP, AICAR and glutamate. The HisH subunit catalyzes the hydrolysis of glutamine to glutamate and ammonia as part of the synthesis of IGP and AICAR. The resulting ammonia molecule is channeled to the active site of HisF. In Desulfovibrio desulfuricans (strain ATCC 27774 / DSM 6949 / MB), this protein is Imidazole glycerol phosphate synthase subunit HisH.